A 255-amino-acid polypeptide reads, in one-letter code: Type III pantothenate kinase (255 aa).

7 to 14 is a binding site for ATP; it reads DVGNTRLK. Residues Tyr96 and 103 to 106 each bind substrate; that span reads GADR. The Proton acceptor role is filled by Asp105. Thr133 serves as a coordination point for ATP. Residue Thr183 participates in substrate binding.

Belongs to the type III pantothenate kinase family. Homodimer. The cofactor is NH4(+). It depends on K(+) as a cofactor.

It is found in the cytoplasm. It carries out the reaction (R)-pantothenate + ATP = (R)-4'-phosphopantothenate + ADP + H(+). The protein operates within cofactor biosynthesis; coenzyme A biosynthesis; CoA from (R)-pantothenate: step 1/5. Its function is as follows. Catalyzes the phosphorylation of pantothenate (Pan), the first step in CoA biosynthesis. In Polaromonas sp. (strain JS666 / ATCC BAA-500), this protein is Type III pantothenate kinase.